Reading from the N-terminus, the 160-residue chain is MHVSIFAVGRMKKGAEQALVHHYLDRFSKSCSAVGFHFKILQEISESRAPTACQRMEEEGRRLIEFLPEKCRLIVLDERGKTVSSFAFAEQLGFYRDEGVRDVIIALGGPDGHNEQIRNRADFLLSFGFMTWPHQIARILLTEQLYRAVTIASNHPYHRF.

Residues Leu-76, Gly-108, and 127-132 (FGFMTW) contribute to the S-adenosyl-L-methionine site.

It belongs to the RNA methyltransferase RlmH family. As to quaternary structure, homodimer.

The protein resides in the cytoplasm. The enzyme catalyses pseudouridine(1915) in 23S rRNA + S-adenosyl-L-methionine = N(3)-methylpseudouridine(1915) in 23S rRNA + S-adenosyl-L-homocysteine + H(+). In terms of biological role, specifically methylates the pseudouridine at position 1915 (m3Psi1915) in 23S rRNA. In Bartonella henselae (strain ATCC 49882 / DSM 28221 / CCUG 30454 / Houston 1) (Rochalimaea henselae), this protein is Ribosomal RNA large subunit methyltransferase H.